We begin with the raw amino-acid sequence, 344 residues long: Dihydroorotase (344 aa).

Zn(2+) contacts are provided by His-14 and His-16. Residues His-16–Arg-18 and Asn-42 contribute to the substrate site. Residues Lys-100, His-137, and His-175 each contribute to the Zn(2+) site. Lys-100 carries the N6-carboxylysine modification. Residue His-137 participates in substrate binding. A substrate-binding site is contributed by Leu-220. Asp-248 is a binding site for Zn(2+). Asp-248 is an active-site residue. Substrate is bound by residues His-252 and Ala-264.

This sequence belongs to the metallo-dependent hydrolases superfamily. DHOase family. Class II DHOase subfamily. Homodimer. Zn(2+) is required as a cofactor.

The enzyme catalyses (S)-dihydroorotate + H2O = N-carbamoyl-L-aspartate + H(+). The protein operates within pyrimidine metabolism; UMP biosynthesis via de novo pathway; (S)-dihydroorotate from bicarbonate: step 3/3. Catalyzes the reversible cyclization of carbamoyl aspartate to dihydroorotate. This chain is Dihydroorotase, found in Erythrobacter litoralis (strain HTCC2594).